Here is a 298-residue protein sequence, read N- to C-terminus: NAD kinase (298 aa).

Aspartate 80 functions as the Proton acceptor in the catalytic mechanism. NAD(+) is bound by residues 80–81 (DG), 154–155 (ND), arginine 182, aspartate 184, 195–200 (TAYALS), alanine 219, and glutamine 253.

Belongs to the NAD kinase family. It depends on a divalent metal cation as a cofactor.

It localises to the cytoplasm. It carries out the reaction NAD(+) + ATP = ADP + NADP(+) + H(+). Functionally, involved in the regulation of the intracellular balance of NAD and NADP, and is a key enzyme in the biosynthesis of NADP. Catalyzes specifically the phosphorylation on 2'-hydroxyl of the adenosine moiety of NAD to yield NADP. The polypeptide is NAD kinase (Delftia acidovorans (strain DSM 14801 / SPH-1)).